Reading from the N-terminus, the 948-residue chain is Valine--tRNA ligase (948 aa).

Residues 40 to 50 (PNVTGSLHMGH) carry the 'HIGH' region motif. Positions 551–555 (KMSKS) match the 'KMSKS' region motif. Lys-554 is an ATP binding site. A coiled-coil region spans residues 879-945 (LIDKGAELAR…GKLAEQHARI (67 aa)).

Belongs to the class-I aminoacyl-tRNA synthetase family. ValS type 1 subfamily. As to quaternary structure, monomer.

Its subcellular location is the cytoplasm. The catalysed reaction is tRNA(Val) + L-valine + ATP = L-valyl-tRNA(Val) + AMP + diphosphate. In terms of biological role, catalyzes the attachment of valine to tRNA(Val). As ValRS can inadvertently accommodate and process structurally similar amino acids such as threonine, to avoid such errors, it has a 'posttransfer' editing activity that hydrolyzes mischarged Thr-tRNA(Val) in a tRNA-dependent manner. The protein is Valine--tRNA ligase of Pseudomonas savastanoi pv. phaseolicola (strain 1448A / Race 6) (Pseudomonas syringae pv. phaseolicola (strain 1448A / Race 6)).